We begin with the raw amino-acid sequence, 643 residues long: Probable potassium transport system protein Kup (643 aa).

A compositionally biased stretch (basic and acidic residues) spans 1 to 12 (MSISSKTEDSDI). Residues 1–20 (MSISSKTEDSDIRSSVMTDH) are disordered. 12 helical membrane-spanning segments follow: residues 28 to 48 (LAGL…TSPL), 65 to 85 (AGNV…IVGL), 121 to 141 (WLLV…GMIT), 158 to 178 (PAFH…LFLF), 187 to 207 (GALF…LGII), 224 to 244 (GISF…AVFL), 268 to 288 (WFLL…ALLL), 301 to 321 (LVPS…TIIA), 358 to 378 (IYVP…VAWF), 384 to 404 (LAAA…ILFY), 415 to 435 (PAAL…FFGA), and 440 to 460 (LFHG…IMNT).

Belongs to the HAK/KUP transporter (TC 2.A.72) family.

The protein resides in the cell inner membrane. It carries out the reaction K(+)(in) + H(+)(in) = K(+)(out) + H(+)(out). In terms of biological role, transport of potassium into the cell. Likely operates as a K(+):H(+) symporter. This Chlorobium luteolum (strain DSM 273 / BCRC 81028 / 2530) (Pelodictyon luteolum) protein is Probable potassium transport system protein Kup.